The following is a 475-amino-acid chain: Legumain (475 aa).

The first 15 residues, 1-15 (MVMMLVMLSLHGTAA), serve as a signal peptide directing secretion. Residues 16–35 (RLNRREWDSVIQLPTEPVDD) constitute a propeptide that is removed on maturation. The active site involves His-158. Cys-200 functions as the Nucleophile in the catalytic mechanism. A disulfide bond links Cys-233 and Cys-247. N-linked (GlcNAc...) asparagine glycosylation occurs at Asn-300. Cystine bridges form between Cys-411–Cys-441 and Cys-423–Cys-458.

The protein belongs to the peptidase C13 family. In terms of assembly, homodimer.

The catalysed reaction is Hydrolysis of proteins and small molecule substrates at -Asn-|-Xaa- bonds.. Repressed by various protease inhibitors including p-chloromercuribenzene sulfonic acid (PCMBS), N-ethylmaleimide, kininogen, elastatinal, cystatin EW and leupeptin. Its function is as follows. Asparaginyl endopeptidase able to cleave almost all peptide bonds on the carboxyl side of Asn residues, except at the NH2 terminus or second position or with N-glycosylated Asn. Responsible for the maturation (circular permutation) of concanavalin A from its precursor, by performing both cleavage and cleavage-coupled transpeptidation to form conA. The chain is Legumain from Canavalia ensiformis (Jack bean).